The sequence spans 383 residues: Succinyl-diaminopimelate desuccinylase (383 aa).

His-73 contacts Zn(2+). Asp-75 is an active-site residue. Asp-107 contacts Zn(2+). The Proton acceptor role is filled by Glu-141. Residues Glu-142, Glu-170, and His-356 each contribute to the Zn(2+) site.

It belongs to the peptidase M20A family. DapE subfamily. In terms of assembly, homodimer. Requires Zn(2+) as cofactor. The cofactor is Co(2+).

It carries out the reaction N-succinyl-(2S,6S)-2,6-diaminopimelate + H2O = (2S,6S)-2,6-diaminopimelate + succinate. The protein operates within amino-acid biosynthesis; L-lysine biosynthesis via DAP pathway; LL-2,6-diaminopimelate from (S)-tetrahydrodipicolinate (succinylase route): step 3/3. Catalyzes the hydrolysis of N-succinyl-L,L-diaminopimelic acid (SDAP), forming succinate and LL-2,6-diaminopimelate (DAP), an intermediate involved in the bacterial biosynthesis of lysine and meso-diaminopimelic acid, an essential component of bacterial cell walls. In Pseudomonas aeruginosa (strain UCBPP-PA14), this protein is Succinyl-diaminopimelate desuccinylase.